Consider the following 1501-residue polypeptide: EF-hand calcium-binding domain-containing protein 6 (1501 aa).

The tract at residues 18–47 (RKFTHSRPHSSPCRVYSRNGSPNKFRSSST) is disordered. Residues 35-47 (RNGSPNKFRSSST) are compositionally biased toward polar residues. EF-hand domains lie at 70–105 (DRGD…FLMP), 172–207 (KNIK…FCMK), 297–332 (KSYE…FVYQ), 403–438 (DHSA…MAVK), 439–474 (LSDS…NCRM), 504–539 (RNLQ…FCPF), and 634–669 (QQDP…TGMP). The tract at residues 699–718 (EDPPMRGPETTPPQPPTPSK) is disordered. EF-hand domains follow at residues 741–776 (ESFR…LLLN), 847–882 (NRWS…FDIP), 883–918 (LTPR…NYSP), 964–999 (DRHQ…CGCS), 1069–1104 (SSQL…FCYK), 1176–1211 (SHYH…RVQI), and 1212–1247 (LTDE…ETAA). 4 residues coordinate Ca(2+): D754, D756, D758, and D765. Residue T884 is modified to Phosphothreonine. The disordered stretch occupies residues 1246–1307 (AATPMATGDS…TTVIPGTPPL (62 aa)). Composition is skewed to polar residues over residues 1270–1279 (GTRSALSLPT) and 1286–1301 (SKSQ…TTVI). A Phosphoserine modification is found at S1290. A phosphothreonine mark is found at T1294 and T1304. Residues 1303-1501 (GTPPLQNCDP…YNDFLRAFLQ (199 aa)) are interaction with PARK7. EF-hand domains lie at 1359–1394 (ISKE…LLKA), 1434–1469 (HCWR…YSIN), and 1470–1501 (LSEE…AFLQ). The interval 1407 to 1501 (NAHKMKEAGA…YNDFLRAFLQ (95 aa)) is interaction with AR.

In terms of assembly, microtubule inner protein component of sperm flagellar doublet microtubules. Binds PARK7. Part of a ternary complex containing PARK7, EFCAB6/DJBP and AR. Specifically expressed in the testis.

Its subcellular location is the nucleus. The protein localises to the cytoplasm. It is found in the cytoskeleton. It localises to the flagellum axoneme. Negatively regulates the androgen receptor by recruiting histone deacetylase complex, and protein DJ-1 antagonizes this inhibition by abrogation of this complex. Microtubule inner protein (MIP) part of the dynein-decorated doublet microtubules (DMTs) in cilia axoneme, which is required for motile cilia beating. In Homo sapiens (Human), this protein is EF-hand calcium-binding domain-containing protein 6.